The primary structure comprises 108 residues: UPF0060 membrane protein RSKD131_0092 (108 aa).

Transmembrane regions (helical) follow at residues 5–25 (LAAY…VWAW), 32–52 (ALWL…LALT), 62–82 (AVYG…VEGV), and 86–106 (RWDM…LWAP).

This sequence belongs to the UPF0060 family.

The protein localises to the cell inner membrane. In Cereibacter sphaeroides (strain KD131 / KCTC 12085) (Rhodobacter sphaeroides), this protein is UPF0060 membrane protein RSKD131_0092.